Reading from the N-terminus, the 438-residue chain is Serine hydroxymethyltransferase 1 (438 aa).

Residues Leu130 and 134–136 (GHL) contribute to the (6S)-5,6,7,8-tetrahydrofolate site. Lys239 bears the N6-(pyridoxal phosphate)lysine mark.

It belongs to the SHMT family. Homodimer. Pyridoxal 5'-phosphate is required as a cofactor.

The protein resides in the cytoplasm. It carries out the reaction (6R)-5,10-methylene-5,6,7,8-tetrahydrofolate + glycine + H2O = (6S)-5,6,7,8-tetrahydrofolate + L-serine. Its pathway is one-carbon metabolism; tetrahydrofolate interconversion. It functions in the pathway amino-acid biosynthesis; glycine biosynthesis; glycine from L-serine: step 1/1. In terms of biological role, catalyzes the reversible interconversion of serine and glycine with tetrahydrofolate (THF) serving as the one-carbon carrier. This reaction serves as the major source of one-carbon groups required for the biosynthesis of purines, thymidylate, methionine, and other important biomolecules. Also exhibits THF-independent aldolase activity toward beta-hydroxyamino acids, producing glycine and aldehydes, via a retro-aldol mechanism. The polypeptide is Serine hydroxymethyltransferase 1 (Mycobacterium tuberculosis (strain CDC 1551 / Oshkosh)).